A 199-amino-acid polypeptide reads, in one-letter code: MTAAVWTLLLAYLFGSIPAGVLVARTYGVDIRKVGSGNIGATNVLRALGWGPALVVAFFDVFKGGIAVLVARAFGLSDWMLGGVALMAVLGHNYSVFLRFRGGKGVATSFGTLLFLDPALALWTFPIGLSVILLTRYVSAGSMTGGVAAFVLSLALGRPLWEVATVFLMALLIFWTHRENLKRLQEGTERRLGERAEAR.

A run of 5 helical transmembrane segments spans residues 3 to 23 (AAVW…GVLV), 50 to 70 (WGPA…AVLV), 78 to 98 (DWML…SVFL), 113 to 133 (LLFL…SVIL), and 154 to 174 (LALG…LLIF).

The protein belongs to the PlsY family. In terms of assembly, probably interacts with PlsX.

It is found in the cell inner membrane. The enzyme catalyses an acyl phosphate + sn-glycerol 3-phosphate = a 1-acyl-sn-glycero-3-phosphate + phosphate. The protein operates within lipid metabolism; phospholipid metabolism. In terms of biological role, catalyzes the transfer of an acyl group from acyl-phosphate (acyl-PO(4)) to glycerol-3-phosphate (G3P) to form lysophosphatidic acid (LPA). This enzyme utilizes acyl-phosphate as fatty acyl donor, but not acyl-CoA or acyl-ACP. The protein is Glycerol-3-phosphate acyltransferase of Thermus thermophilus (strain ATCC BAA-163 / DSM 7039 / HB27).